The sequence spans 484 residues: UDP-N-acetylmuramoyl-L-alanyl-D-glutamate--2,6-diaminopimelate ligase (484 aa).

110-116 (GTNGKTT) contacts ATP. UDP-N-acetyl-alpha-D-muramoyl-L-alanyl-D-glutamate is bound by residues 152 to 153 (TT), Ser-179, and Arg-187. An N6-carboxylysine modification is found at Lys-219. Residues Arg-381, 405 to 408 (DNPR), Gly-455, and Glu-459 each bind meso-2,6-diaminopimelate. A Meso-diaminopimelate recognition motif motif is present at residues 405 to 408 (DNPR).

It belongs to the MurCDEF family. MurE subfamily. Mg(2+) serves as cofactor. In terms of processing, carboxylation is probably crucial for Mg(2+) binding and, consequently, for the gamma-phosphate positioning of ATP.

It is found in the cytoplasm. It carries out the reaction UDP-N-acetyl-alpha-D-muramoyl-L-alanyl-D-glutamate + meso-2,6-diaminopimelate + ATP = UDP-N-acetyl-alpha-D-muramoyl-L-alanyl-gamma-D-glutamyl-meso-2,6-diaminopimelate + ADP + phosphate + H(+). It functions in the pathway cell wall biogenesis; peptidoglycan biosynthesis. Functionally, catalyzes the addition of meso-diaminopimelic acid to the nucleotide precursor UDP-N-acetylmuramoyl-L-alanyl-D-glutamate (UMAG) in the biosynthesis of bacterial cell-wall peptidoglycan. The chain is UDP-N-acetylmuramoyl-L-alanyl-D-glutamate--2,6-diaminopimelate ligase from Clostridium perfringens (strain 13 / Type A).